The primary structure comprises 625 residues: Mesothelin (625 aa).

Residues 1–35 (MALPTARPLLGSCGSPICSRSFLLLLLSLGWIPRL) form the signal peptide. A glycan (N-linked (GlcNAc...) asparagine) is linked at Asn-93. Residue Ser-202 is modified to Phosphoserine. Cys-304 and Cys-328 are joined by a disulfide. N-linked (GlcNAc...) asparagine glycosylation is found at Asn-390, Asn-488, and Asn-517. The GPI-anchor amidated serine moiety is linked to residue Ser-600. A propeptide spans 601–625 (SRASLLGPGFVLIWIPALLPALRLS) (removed in mature form).

This sequence belongs to the mesothelin family. In terms of assembly, interacts with MUC16. Post-translationally, proteolytically cleaved by a furin-like convertase to generate megakaryocyte-potentiating factor (MPF), and the cleaved form of mesothelin. In terms of tissue distribution, highly expressed in lung and heart. Expressed at low levels in spleen, liver, kidney and testis. Present in lung (at protein level).

The protein localises to the cell membrane. It is found in the golgi apparatus. It localises to the secreted. Functionally, membrane-anchored forms may play a role in cellular adhesion. Megakaryocyte-potentiating factor (MPF) may potentiate megakaryocyte colony formation. The polypeptide is Mesothelin (Msln) (Mus musculus (Mouse)).